Here is a 189-residue protein sequence, read N- to C-terminus: Selenoprotein S (189 aa).

The helical transmembrane segment at 28–48 (SLLATYGWYIVFSCILLYVVF) threads the bilayer. The VCP/p97-interacting motif (VIM) stretch occupies residues 78 to 90 (RQEALAAARLKMQ). The disordered stretch occupies residues 115-189 (KIEMWDSMQE…RRGPSSGGUG (75 aa)). Position 140 is a phosphoserine (Ser-140). Positions 159-173 (RGGGYNPLSGEGGGA) are enriched in gly residues. A non-standard amino acid (selenocysteine) is located at residue Sec-188.

It belongs to the selenoprotein S family. As to quaternary structure, interacts with DERL1 and (via VIM motif) with VCP, suggesting that it forms a membrane complex with DERL1 that serves as a receptor for VCP. Also interacts with DERL2, DERL3 and SELENOK. The SELENOK-SELENOS complex interacts with VCP. Interacts with CCDC47. Truncated SELENOS proteins produced by failed UGA/Sec decoding are ubiquitinated by the CRL2(KLHDC2) and CRL2(KLHDC3) complexes, which recognizes the glycine (Gly) at the C-terminus of truncated SELENOS proteins. Truncated SELENOS proteins produced by failed UGA/Sec decoding are also ubiquitinated by the CRL5(KLHDC1) complex.

It is found in the endoplasmic reticulum membrane. The protein resides in the cytoplasm. Involved in the degradation process of misfolded endoplasmic reticulum (ER) luminal proteins. Participates in the transfer of misfolded proteins from the ER to the cytosol, where they are destroyed by the proteasome in a ubiquitin-dependent manner. Probably acts by serving as a linker between DERL1, which mediates the retrotranslocation of misfolded proteins into the cytosol, and the ATPase complex VCP, which mediates the translocation and ubiquitination. The chain is Selenoprotein S from Homo sapiens (Human).